We begin with the raw amino-acid sequence, 344 residues long: Thiamine thiazole synthase (344 aa).

Substrate is bound by residues Cys90, 111–112 (EA), Gly119, and Val184. Cys232 carries the 2,3-didehydroalanine (Cys) modification. Residues Asp234, His249, Met301, and 311-313 (RMG) each bind substrate.

The protein belongs to the THI4 family. As to quaternary structure, homooctamer. Interacts with cyp-41. Requires Fe cation as cofactor. In terms of processing, during the catalytic reaction, a sulfide is transferred from Cys-232 to a reaction intermediate, generating a dehydroalanine residue.

The protein localises to the cytoplasm. The protein resides in the nucleus. It catalyses the reaction [ADP-thiazole synthase]-L-cysteine + glycine + NAD(+) = [ADP-thiazole synthase]-dehydroalanine + ADP-5-ethyl-4-methylthiazole-2-carboxylate + nicotinamide + 3 H2O + 2 H(+). In terms of biological role, involved in biosynthesis of the thiamine precursor thiazole. Catalyzes the conversion of NAD and glycine to adenosine diphosphate 5-(2-hydroxyethyl)-4-methylthiazole-2-carboxylic acid (ADT), an adenylated thiazole intermediate. The reaction includes an iron-dependent sulfide transfer from a conserved cysteine residue of the protein to a thiazole intermediate. The enzyme can only undergo a single turnover, which suggests it is a suicide enzyme. May have additional roles in adaptation to various stress conditions and in DNA damage tolerance. In Neurospora crassa (strain ATCC 24698 / 74-OR23-1A / CBS 708.71 / DSM 1257 / FGSC 987), this protein is Thiamine thiazole synthase.